A 675-amino-acid chain; its full sequence is Polyamine deacetylase HDAC10 (675 aa).

Aspartate 22 lines the substrate pocket. Residues 23–26 (PACE) carry the Substrate specificity motif. Aspartate 94 lines the substrate pocket. Histidine 137 serves as the catalytic Proton donor/acceptor. Zn(2+) is bound by residues aspartate 174, histidine 176, and aspartate 267. Position 307 (tyrosine 307) interacts with substrate. Residues 362 to 399 (LAQSETNPKRPRLDATNGGPKESSEPASESNPKKTAQD) are disordered.

The protein belongs to the histone deacetylase family. HD type 2 subfamily.

It localises to the cytoplasm. It is found in the nucleus. The catalysed reaction is N(8)-acetylspermidine + H2O = spermidine + acetate. It catalyses the reaction N-acetylputrescine + H2O = putrescine + acetate. It carries out the reaction N-acetylcadaverine + H2O = cadaverine + acetate. In terms of biological role, polyamine deacetylase (PDAC), which acts preferentially on N(8)-acetylspermidine, and also on acetylcadaverine and acetylputrescine. Exhibits attenuated catalytic activity toward N(1),N(8)-diacetylspermidine and very low activity, if any, toward N(1)-acetylspermidine. Has a very weak lysine deacetylase, if any. This chain is Polyamine deacetylase HDAC10 (hdac10), found in Danio rerio (Zebrafish).